The primary structure comprises 160 residues: Transcriptional regulator MraZ (160 aa).

2 SpoVT-AbrB domains span residues 5–50 and 93–136; these read NFET…DGGY and AVEC…SQAE.

Belongs to the MraZ family. As to quaternary structure, forms oligomers.

The protein resides in the cytoplasm. It localises to the nucleoid. This chain is Transcriptional regulator MraZ, found in Geotalea daltonii (strain DSM 22248 / JCM 15807 / FRC-32) (Geobacter daltonii).